Here is a 613-residue protein sequence, read N- to C-terminus: MPIQVLPPQLANQIAAGEVVERPASVVKELVENSLDAGATRIDIDIERGGAKLIRIRDNGCGIKKDELALALARHATSKIASLDDLEAIISLGFRGEALASISSVSRLTLTSRTSEQQEAWQAYAEGRDMDVTVKPAAHPVGTTLEVLDLFYNTPARRKFMRTEKTEFNHIDEIIRRIALARFDVTINLSHNGKVMRQYRAVAEGGQKERRLGAICGTAFLEQALAIEWQHGDLAMRGWVADPKTMNATLAEIQYCYVNGRMMRDRLINHAIRQACEDKLGADQQPAFVLYLEIDPHQVDVNVHPAKHEVRFHQSRLVHDFIYQGVLSVLQQQAEPSLPLTEDAISPRPIPENRVAAGRNQFAEPAVARQPEAPRYSSGASAPRPTGANYPHAPVYQKQQGALYSKLLDTPAVERKENVAPSAPALDGHSQSFGRVLTIIAPDMALLERDSHIALLALPVAERWLKQVQLTPGTNAACAQPLLIPVRLKVSAEEVAVLNRAKAVLVEMGIEFVVEAHHVTIRAVPLPLRQQNLQNLIPELIGYLAQQTSFDAANTAQWMARHLASDHNLWSMAQAITVLAEVERLYPQLVKAPPGGLLQPVDLHSAMKALKDE.

Residues 364–393 (EPAVARQPEAPRYSSGASAPRPTGANYPHA) form a disordered region.

The protein belongs to the DNA mismatch repair MutL/HexB family.

This protein is involved in the repair of mismatches in DNA. It is required for dam-dependent methyl-directed DNA mismatch repair. May act as a 'molecular matchmaker', a protein that promotes the formation of a stable complex between two or more DNA-binding proteins in an ATP-dependent manner without itself being part of a final effector complex. The chain is DNA mismatch repair protein MutL from Enterobacter sp. (strain 638).